We begin with the raw amino-acid sequence, 1025 residues long: Multidrug resistance protein MdtC (1025 aa).

12 consecutive transmembrane segments (helical) span residues 3–23, 333–353, 360–380, 387–407, 431–451, 463–483, 528–548, 853–873, 875–895, 897–917, 953–973, and 984–1004; these read FFAL…AITL, EVEQ…FLFL, IIPA…MYLC, LSLM…IVVL, VGFT…PLLL, FAVT…TLTP, LVGV…ISIP, VILI…LYES, VHPL…LLAL, LFNA…IGIV, PIMM…LSGG, and ITIV…TPVV.

The protein belongs to the resistance-nodulation-cell division (RND) (TC 2.A.6) family. MdtC subfamily. In terms of assembly, part of a tripartite efflux system composed of MdtA, MdtB and MdtC. MdtC forms a heteromultimer with MdtB.

The protein resides in the cell inner membrane. The MdtABC tripartite complex confers resistance against novobiocin and deoxycholate. The polypeptide is Multidrug resistance protein MdtC (Escherichia fergusonii (strain ATCC 35469 / DSM 13698 / CCUG 18766 / IAM 14443 / JCM 21226 / LMG 7866 / NBRC 102419 / NCTC 12128 / CDC 0568-73)).